A 70-amino-acid polypeptide reads, in one-letter code: DNA gyrase inhibitor YacG (70 aa).

Positions 20, 23, 35, and 39 each coordinate Zn(2+).

It belongs to the DNA gyrase inhibitor YacG family. As to quaternary structure, interacts with GyrB. Zn(2+) is required as a cofactor.

Inhibits all the catalytic activities of DNA gyrase by preventing its interaction with DNA. Acts by binding directly to the C-terminal domain of GyrB, which probably disrupts DNA binding by the gyrase. The sequence is that of DNA gyrase inhibitor YacG from Rhizobium leguminosarum bv. trifolii (strain WSM2304).